The primary structure comprises 404 residues: Arginine biosynthesis bifunctional protein ArgJ (404 aa).

Substrate-binding residues include Thr166, Lys189, Thr200, Glu280, Asn399, and Ser404. Residue Thr200 is the Nucleophile of the active site.

Belongs to the ArgJ family. As to quaternary structure, heterotetramer of two alpha and two beta chains.

The protein resides in the cytoplasm. The enzyme catalyses N(2)-acetyl-L-ornithine + L-glutamate = N-acetyl-L-glutamate + L-ornithine. The catalysed reaction is L-glutamate + acetyl-CoA = N-acetyl-L-glutamate + CoA + H(+). The protein operates within amino-acid biosynthesis; L-arginine biosynthesis; L-ornithine and N-acetyl-L-glutamate from L-glutamate and N(2)-acetyl-L-ornithine (cyclic): step 1/1. Its pathway is amino-acid biosynthesis; L-arginine biosynthesis; N(2)-acetyl-L-ornithine from L-glutamate: step 1/4. Its function is as follows. Catalyzes two activities which are involved in the cyclic version of arginine biosynthesis: the synthesis of N-acetylglutamate from glutamate and acetyl-CoA as the acetyl donor, and of ornithine by transacetylation between N(2)-acetylornithine and glutamate. In Mycolicibacterium paratuberculosis (strain ATCC BAA-968 / K-10) (Mycobacterium paratuberculosis), this protein is Arginine biosynthesis bifunctional protein ArgJ.